The following is a 400-amino-acid chain: CCA-adding enzyme (400 aa).

Residues G8 and R11 each coordinate ATP. Residues G8 and R11 each coordinate CTP. D21 and D23 together coordinate Mg(2+). Residues R91, R137, and R140 each coordinate ATP. R91, R137, and R140 together coordinate CTP. The 106-residue stretch at N217–W322 folds into the HD domain.

It belongs to the tRNA nucleotidyltransferase/poly(A) polymerase family. Bacterial CCA-adding enzyme type 2 subfamily. Mg(2+) serves as cofactor.

The enzyme catalyses a tRNA precursor + 2 CTP + ATP = a tRNA with a 3' CCA end + 3 diphosphate. The catalysed reaction is a tRNA with a 3' CCA end + 2 CTP + ATP = a tRNA with a 3' CCACCA end + 3 diphosphate. Catalyzes the addition and repair of the essential 3'-terminal CCA sequence in tRNAs without using a nucleic acid template. Adds these three nucleotides in the order of C, C, and A to the tRNA nucleotide-73, using CTP and ATP as substrates and producing inorganic pyrophosphate. tRNA 3'-terminal CCA addition is required both for tRNA processing and repair. Also involved in tRNA surveillance by mediating tandem CCA addition to generate a CCACCA at the 3' terminus of unstable tRNAs. While stable tRNAs receive only 3'-terminal CCA, unstable tRNAs are marked with CCACCA and rapidly degraded. The chain is CCA-adding enzyme from Actinobacillus succinogenes (strain ATCC 55618 / DSM 22257 / CCUG 43843 / 130Z).